The primary structure comprises 198 residues: Imidazoleglycerol-phosphate dehydratase (198 aa).

This sequence belongs to the imidazoleglycerol-phosphate dehydratase family.

The protein resides in the cytoplasm. The enzyme catalyses D-erythro-1-(imidazol-4-yl)glycerol 3-phosphate = 3-(imidazol-4-yl)-2-oxopropyl phosphate + H2O. It functions in the pathway amino-acid biosynthesis; L-histidine biosynthesis; L-histidine from 5-phospho-alpha-D-ribose 1-diphosphate: step 6/9. The polypeptide is Imidazoleglycerol-phosphate dehydratase (Nitratidesulfovibrio vulgaris (strain DP4) (Desulfovibrio vulgaris)).